Reading from the N-terminus, the 352-residue chain is Ion-translocating oxidoreductase complex subunit D (352 aa).

Transmembrane regions (helical) follow at residues 20–40 (IMLLVLLAAVPGIAAQLWFFG), 42–62 (GTLVQILLASVSALLAEALVL), 89–109 (IPPLAPWWMVVLGTVFAVIIA), and 123–143 (PAMIGYVVLLISFPVQMTSWL). Thr-187 carries the FMN phosphoryl threonine modification. 5 consecutive transmembrane segments (helical) span residues 214–234 (ILAGAGWQWVNLAWLAGGVWL), 242–262 (WHIPLSFLVTLALCATLGWLF), 267–287 (LAAPQIHLLSGATMLGAFFIL), 301–321 (LIFGALAGLLVWMIRSFGGYP), and 322–342 (DGVAFAVLLANITVPLIDYYT).

This sequence belongs to the NqrB/RnfD family. As to quaternary structure, the complex is composed of six subunits: RsxA, RsxB, RsxC, RsxD, RsxE and RsxG. Requires FMN as cofactor.

The protein resides in the cell inner membrane. Its function is as follows. Part of a membrane-bound complex that couples electron transfer with translocation of ions across the membrane. Required to maintain the reduced state of SoxR. The polypeptide is Ion-translocating oxidoreductase complex subunit D (Escherichia coli O81 (strain ED1a)).